Reading from the N-terminus, the 125-residue chain is Large ribosomal subunit protein bL20 (125 aa).

The protein belongs to the bacterial ribosomal protein bL20 family.

Binds directly to 23S ribosomal RNA and is necessary for the in vitro assembly process of the 50S ribosomal subunit. It is not involved in the protein synthesizing functions of that subunit. This is Large ribosomal subunit protein bL20 from Methylobacterium radiotolerans (strain ATCC 27329 / DSM 1819 / JCM 2831 / NBRC 15690 / NCIMB 10815 / 0-1).